A 74-amino-acid polypeptide reads, in one-letter code: Progonadoliberin-3 (74 aa).

The N-terminal stretch at 1–15 (VRVVVLALVAQVTLS) is a signal peptide. The residue at position 16 (Gln-16) is a Pyrrolidone carboxylic acid. Gly-25 carries the post-translational modification Glycine amide.

It belongs to the GnRH family.

The protein resides in the secreted. Its function is as follows. Stimulates the secretion of gonadotropins. The chain is Progonadoliberin-3 (gnrh3) from Oncorhynchus tshawytscha (Chinook salmon).